Reading from the N-terminus, the 567-residue chain is Glutathione/L-cysteine transport system ATP-binding/permease protein CydC (567 aa).

A run of 6 helical transmembrane segments spans residues 14 to 34 (ILTL…MQAE), 44 to 64 (FNGK…IAFI), 130 to 150 (FLPK…YVFF), 156 to 176 (AIIL…LGLV), 240 to 260 (SFAL…FLGL), and 266 to 286 (DILL…FLPV). One can recognise an ABC transmembrane type-1 domain in the interval 17–298 (LITCLTLIQT…VGNDYHATLN (282 aa)). The ABC transporter domain maps to 321–561 (LQLEAWSDQD…NGVYTKLVKA (241 aa)). 360–367 (GASGAGKS) provides a ligand contact to ATP.

The protein belongs to the ABC transporter superfamily. Cysteine exporter (TC 3.A.1.129.1) family. In terms of assembly, forms a heterodimer with CydD.

It localises to the cell membrane. It catalyses the reaction L-cysteine(in) + ATP + H2O = L-cysteine(out) + ADP + phosphate + H(+). The enzyme catalyses glutathione(in) + ATP + H2O = glutathione(out) + ADP + phosphate + H(+). Its function is as follows. Part of the ABC transporter complex CydDC that exports the reduced low-molecular-weight thiols cysteine and glutathione from the cell. Export of these thiol-containing redox-active molecules may be crucial for redox homeostasis, permitting correct assembly of various respiratory complexes and formation of correct disulfide bonds in secreted proteins. CydC contains transmembrane domains (TMD), which form a pore in the membrane, and an ATP-binding domain (NBD), which is responsible for energy generation. This Bacillus subtilis (strain 168) protein is Glutathione/L-cysteine transport system ATP-binding/permease protein CydC (cydC).